Reading from the N-terminus, the 431-residue chain is Histidinol dehydrogenase (431 aa).

NAD(+) contacts are provided by Tyr-127, Gln-185, and Asn-208. Residues Ser-234, Gln-256, and His-259 each contribute to the substrate site. Positions 256 and 259 each coordinate Zn(2+). Active-site proton acceptor residues include Glu-323 and His-324. Substrate is bound by residues His-324, Asp-357, Glu-411, and His-416. A Zn(2+)-binding site is contributed by Asp-357. His-416 is a binding site for Zn(2+).

Belongs to the histidinol dehydrogenase family. The cofactor is Zn(2+).

It catalyses the reaction L-histidinol + 2 NAD(+) + H2O = L-histidine + 2 NADH + 3 H(+). The protein operates within amino-acid biosynthesis; L-histidine biosynthesis; L-histidine from 5-phospho-alpha-D-ribose 1-diphosphate: step 9/9. Functionally, catalyzes the sequential NAD-dependent oxidations of L-histidinol to L-histidinaldehyde and then to L-histidine. In Vibrio cholerae serotype O1 (strain ATCC 39315 / El Tor Inaba N16961), this protein is Histidinol dehydrogenase.